We begin with the raw amino-acid sequence, 405 residues long: Probable tRNA sulfurtransferase (405 aa).

The 109-residue stretch at 75–183 folds into the THUMP domain; sequence PRAAGAAADV…QNLAYVYLET (109 aa). ATP is bound by residues 201 to 202, K285, G307, and Q316; that span reads LM.

Belongs to the ThiI family.

The protein localises to the cytoplasm. The enzyme catalyses [ThiI sulfur-carrier protein]-S-sulfanyl-L-cysteine + a uridine in tRNA + 2 reduced [2Fe-2S]-[ferredoxin] + ATP + H(+) = [ThiI sulfur-carrier protein]-L-cysteine + a 4-thiouridine in tRNA + 2 oxidized [2Fe-2S]-[ferredoxin] + AMP + diphosphate. The catalysed reaction is [ThiS sulfur-carrier protein]-C-terminal Gly-Gly-AMP + S-sulfanyl-L-cysteinyl-[cysteine desulfurase] + AH2 = [ThiS sulfur-carrier protein]-C-terminal-Gly-aminoethanethioate + L-cysteinyl-[cysteine desulfurase] + A + AMP + 2 H(+). It functions in the pathway cofactor biosynthesis; thiamine diphosphate biosynthesis. Catalyzes the ATP-dependent transfer of a sulfur to tRNA to produce 4-thiouridine in position 8 of tRNAs, which functions as a near-UV photosensor. Also catalyzes the transfer of sulfur to the sulfur carrier protein ThiS, forming ThiS-thiocarboxylate. This is a step in the synthesis of thiazole, in the thiamine biosynthesis pathway. The sulfur is donated as persulfide by IscS. In Methanosarcina mazei (strain ATCC BAA-159 / DSM 3647 / Goe1 / Go1 / JCM 11833 / OCM 88) (Methanosarcina frisia), this protein is Probable tRNA sulfurtransferase.